A 161-amino-acid chain; its full sequence is Nucleotide-binding protein PSEEN4469 (161 aa).

The protein belongs to the YajQ family.

Nucleotide-binding protein. In Pseudomonas entomophila (strain L48), this protein is Nucleotide-binding protein PSEEN4469.